The primary structure comprises 154 residues: Ubiquitin-conjugating enzyme E2 L5 (154 aa).

Residues 2-149 enclose the UBC core domain; the sequence is AASRRLMKEL…AEEFTKKYGE (148 aa). Residue cysteine 86 is the Glycyl thioester intermediate of the active site.

This sequence belongs to the ubiquitin-conjugating enzyme family.

The enzyme catalyses S-ubiquitinyl-[E1 ubiquitin-activating enzyme]-L-cysteine + [E2 ubiquitin-conjugating enzyme]-L-cysteine = [E1 ubiquitin-activating enzyme]-L-cysteine + S-ubiquitinyl-[E2 ubiquitin-conjugating enzyme]-L-cysteine.. It participates in protein modification; protein ubiquitination. Functionally, catalyzes the covalent attachment of ubiquitin to other proteins. In Homo sapiens (Human), this protein is Ubiquitin-conjugating enzyme E2 L5.